A 179-amino-acid polypeptide reads, in one-letter code: Centromere protein R (179 aa).

The segment at 1-79 is disordered; that stretch reads MSAKRSLKLD…RLSRRGQPQT (79 aa). A compositionally biased stretch (polar residues) spans 30 to 50; the sequence is NSYSPTTGTCQISPFSSPTSH. The segment covering 51 to 64 has biased composition (basic and acidic residues); it reads NAEDLRNGLSHGDE. Positions 172–176 match the LXXLL motif motif; it reads LQLLL.

The protein localises to the nucleus. The protein resides in the chromosome. It is found in the centromere. It localises to the kinetochore. Its function is as follows. Transcription coregulator that can have both coactivator and corepressor functions. Involved in the coactivation of nuclear receptors for retinoid X (RXRs) and thyroid hormone (TRs) in a ligand-dependent fashion. Probable component of a centromeric complex involved in assembly of kinetochore proteins, mitotic progression and chromosome segregation. This Gallus gallus (Chicken) protein is Centromere protein R (CENPR).